The primary structure comprises 223 residues: Small ribosomal subunit protein uS3 (223 aa).

The region spanning 39–117 (IREHLRKKPS…RPELNAKLVA (79 aa)) is the KH type-2 domain.

It belongs to the universal ribosomal protein uS3 family. Part of the 30S ribosomal subunit. Forms a tight complex with proteins S10 and S14.

Its function is as follows. Binds the lower part of the 30S subunit head. Binds mRNA in the 70S ribosome, positioning it for translation. The polypeptide is Small ribosomal subunit protein uS3 (Chlamydia caviae (strain ATCC VR-813 / DSM 19441 / 03DC25 / GPIC) (Chlamydophila caviae)).